We begin with the raw amino-acid sequence, 597 residues long: Elongation factor 4 (597 aa).

The 183-residue stretch at 2–184 folds into the tr-type G domain; sequence DHIRNFSIIA…ALIAKVPPPK (183 aa). GTP is bound by residues 14 to 19 and 131 to 134; these read DHGKST and NKID.

It belongs to the TRAFAC class translation factor GTPase superfamily. Classic translation factor GTPase family. LepA subfamily.

It localises to the cell inner membrane. The catalysed reaction is GTP + H2O = GDP + phosphate + H(+). Its function is as follows. Required for accurate and efficient protein synthesis under certain stress conditions. May act as a fidelity factor of the translation reaction, by catalyzing a one-codon backward translocation of tRNAs on improperly translocated ribosomes. Back-translocation proceeds from a post-translocation (POST) complex to a pre-translocation (PRE) complex, thus giving elongation factor G a second chance to translocate the tRNAs correctly. Binds to ribosomes in a GTP-dependent manner. The chain is Elongation factor 4 from Burkholderia vietnamiensis (strain G4 / LMG 22486) (Burkholderia cepacia (strain R1808)).